A 274-amino-acid chain; its full sequence is Oxidized low-density lipoprotein receptor 1 (274 aa).

The disordered stretch occupies residues 1 to 28; sequence MTLDDLKSNSMKDQPDEKSNGDKAEGPR. Topologically, residues 1 to 37 are cytoplasmic; the sequence is MTLDDLKSNSMKDQPDEKSNGDKAEGPRSLSTLRWRP. The span at 13 to 26 shows a compositional bias: basic and acidic residues; it reads DQPDEKSNGDKAEG. A helical; Signal-anchor for type II membrane protein transmembrane segment spans residues 38–60; sequence AALILGLLCLGLLVTVILLIIQL. C46 carries S-palmitoyl cysteine lipidation. The tract at residues 61–150 is neck; the sequence is SQVSDLLKQQ…SGPCPQDWLW (90 aa). Residues 61-274 lie on the Extracellular side of the membrane; the sequence is SQVSDLLKQQ…QKRANLLRAQ (214 aa). Residues 89 to 142 are a coiled coil; sequence RQAEKSSQESQRELTEMIETLAHKLDEKSKKLMELQQQNLNLQKALEKAANFSG. An N-linked (GlcNAc...) asparagine glycan is attached at N139. Cystine bridges form between C144–C155, C172–C264, and C243–C256. The region spanning 151–265 is the C-type lectin domain; the sequence is HEENCYKFSS…CILNAFSICQ (115 aa).

As to quaternary structure, homodimer; disulfide-linked. May form a hexamer composed of 3 homodimers. Interacts with HSP70. N-glycosylated.

It is found in the cell membrane. Its subcellular location is the membrane raft. It localises to the secreted. Functionally, receptor that mediates the recognition, internalization and degradation of oxidatively modified low density lipoprotein (oxLDL) by vascular endothelial cells. OxLDL is a marker of atherosclerosis that induces vascular endothelial cell activation and dysfunction, resulting in pro-inflammatory responses, pro-oxidative conditions and apoptosis. Its association with oxLDL induces the activation of NF-kappa-B through an increased production of intracellular reactive oxygen and a variety of pro-atherogenic cellular responses including a reduction of nitric oxide (NO) release, monocyte adhesion and apoptosis. In addition to binding oxLDL, it acts as a receptor for the HSP70 protein involved in antigen cross-presentation to naive T-cells in dendritic cells, thereby participating in cell-mediated antigen cross-presentation. Also involved in inflammatory process, by acting as a leukocyte-adhesion molecule at the vascular interface in endotoxin-induced inflammation. Also acts as a receptor for advanced glycation end (AGE) products, activated platelets, monocytes, apoptotic cells and both Gram-negative and Gram-positive bacteria. The sequence is that of Oxidized low-density lipoprotein receptor 1 (OLR1) from Sus scrofa (Pig).